The sequence spans 411 residues: MGEKRKTRQAEVNIGMVGHVDHGKTTLTKALTGVWTDTHSEELRRGITIKIGFADAEIRRCSNCGRYSTSPICPYCGHETEFIRRVSFIDSPGHEALMTTMLAGASLMDGAILVIAANEPCPRPQTREHLMALQIIGQKNIIIAQNKIELVDKEKALENYRQIKEFIKGTVAENAPIIPISALHGANIDVLVKAIEEFIPTPKRDSNKPPKMLVLRSFDVNKPGTPPEKLVGGVLGGSIVQGKLKVGDEIEIRPGVPYEEHGRIKYEPITTEIVSLQAGGQFVEEAYPGGLVGIGTKLDPYLTKGDLMAGNVVGKPGKLPPVWTDLRLEVHLLERVVGTEQELNVEPIKRKEVLLLNVGTARTMGLVTALGKDEIELKLQIPVCAEPGERVAISRQIGSRWRLIGYGIIKE.

Positions 9–203 (QAEVNIGMVG…AIEEFIPTPK (195 aa)) constitute a tr-type G domain. The tract at residues 18–25 (GHVDHGKT) is G1. Mg(2+) is bound by residues Asp21, Thr25, Gly46, and Thr48. A GTP-binding site is contributed by 21-26 (DHGKTT). Residues 46–50 (GITIK) are G2. Positions 61, 64, 73, and 76 each coordinate Zn(2+). The interval 90–93 (DSPG) is G3. GTP contacts are provided by residues 146-149 (NKIE) and 181-183 (SAL). The segment at 146–149 (NKIE) is G4. The G5 stretch occupies residues 181-183 (SAL).

This sequence belongs to the TRAFAC class translation factor GTPase superfamily. Classic translation factor GTPase family. EIF2G subfamily. Heterotrimer composed of an alpha, a beta and a gamma chain. It depends on Mg(2+) as a cofactor.

The catalysed reaction is GTP + H2O = GDP + phosphate + H(+). Its function is as follows. eIF-2 functions in the early steps of protein synthesis by forming a ternary complex with GTP and initiator tRNA. The protein is Translation initiation factor 2 subunit gamma of Pyrococcus furiosus (strain ATCC 43587 / DSM 3638 / JCM 8422 / Vc1).